The sequence spans 553 residues: Putative transport protein YidE (553 aa).

The next 5 membrane-spanning stretches (helical) occupy residues 4–24, 28–48, 65–85, 95–115, and 158–178; these read IALT…IGNV, GIGL…HFVS, FGLI…FFAS, LFAV…HKLF, and MSYA…MWML. 2 RCK C-terminal domains span residues 191–276 and 279–361; these read QQHE…VIGQ and DTSL…VLGN. Transmembrane regions (helical) follow at residues 371-391, 394-414, 439-459, 464-484, and 533-553; these read MLPV…PVFV, FPAA…LILG, IVLF…NTLV, LSWI…VGIL, and LVMF…WSIG.

It belongs to the AAE transporter (TC 2.A.81) family. YidE subfamily.

Its subcellular location is the cell membrane. The chain is Putative transport protein YidE from Shigella dysenteriae serotype 1 (strain Sd197).